We begin with the raw amino-acid sequence, 219 residues long: Deoxyribose-phosphate aldolase (219 aa).

Asp89 serves as the catalytic Proton donor/acceptor. Lys151 acts as the Schiff-base intermediate with acetaldehyde in catalysis. Lys180 functions as the Proton donor/acceptor in the catalytic mechanism.

The protein belongs to the DeoC/FbaB aldolase family. DeoC type 1 subfamily.

The protein resides in the cytoplasm. The enzyme catalyses 2-deoxy-D-ribose 5-phosphate = D-glyceraldehyde 3-phosphate + acetaldehyde. Its pathway is carbohydrate degradation; 2-deoxy-D-ribose 1-phosphate degradation; D-glyceraldehyde 3-phosphate and acetaldehyde from 2-deoxy-alpha-D-ribose 1-phosphate: step 2/2. In terms of biological role, catalyzes a reversible aldol reaction between acetaldehyde and D-glyceraldehyde 3-phosphate to generate 2-deoxy-D-ribose 5-phosphate. The sequence is that of Deoxyribose-phosphate aldolase from Clostridioides difficile (strain 630) (Peptoclostridium difficile).